We begin with the raw amino-acid sequence, 296 residues long: HVA22-like protein i (296 aa).

The tract at residues S146–R296 is disordered. Residues V180 to N193 are compositionally biased toward low complexity. A compositionally biased stretch (polar residues) spans A223–V233. The segment covering Q251 to S261 has biased composition (acidic residues). Residues G270–R281 show a composition bias toward basic and acidic residues.

Belongs to the DP1 family.

The chain is HVA22-like protein i (HVA22I) from Arabidopsis thaliana (Mouse-ear cress).